Here is a 374-residue protein sequence, read N- to C-terminus: Multicilin (374 aa).

Residues 164-212 are a coiled coil; it reads EQYWRDVADHNQKALGDALVENNQLQVSLTEKQEEIVSLKEKNIQLNEL. The tract at residues 230 to 260 is disordered; it reads RTKQNSGATQGRLPVKRSLEDFYPQSNEPDS. The interval 330-374 is TIRT domain; the sequence is TDLEDVSFRTSIKEHSTIRTLAFPQGNAFTIRTSGGGYKFRWVPN.

It belongs to the geminin family. In terms of assembly, component of the EDM complex, at least composed of e2f4, e2f5, mcidas and tfdp1. In terms of tissue distribution, expressed in multiciliate differentiating cells. Expression is lost by stage 26, when multiciliate cells in the skin are fully differentiated, but is then detected in the developing nephrostomes of the kidneys where multiciliate cells form at later stages.

It is found in the nucleus. Functionally, transcription regulator specifically required for multiciliate cell differentiation. Acts in a multiprotein complex containing E2F4 and E2F5 that binds and activates genes required for centriole biogenesis. Activates genes required for centriole assembly (plk4, cep152) and genes specifically required for motile cilia formation (foxj1). Also promotes the deuterosome pathway of centriole biogenesis by activating expression of ccdc67/deup1, but not its paralog cep63. The sequence is that of Multicilin (mcidas) from Xenopus laevis (African clawed frog).